The chain runs to 714 residues: 2'-5'-oligoadenylate synthase 2 (714 aa).

Glycine 2 is lipidated: N-myristoyl glycine. OAS domain stretches follow at residues 11 to 336 (KPSE…SWNV) and 344 to 683 (TPGH…WNVP). Serine 397 contacts ATP. Aspartate 409 and aspartate 480 together coordinate Mg(2+). 2 residues coordinate ATP: arginine 544 and lysine 547.

This sequence belongs to the 2-5A synthase family. As to quaternary structure, homodimer. Mg(2+) serves as cofactor. In terms of processing, myristoylation is not essential for its activity. Post-translationally, glycosylated. Glycosylation is essential for its activity.

The protein localises to the cytoplasm. Its subcellular location is the perinuclear region. It catalyses the reaction 3 ATP = 5'-triphosphoadenylyl-(2'-&gt;5')-adenylyl-(2'-&gt;5')-adenosine + 2 diphosphate. Produced as a latent enzyme which is activated by double stranded RNA (dsRNA) generated during the course of viral infection. The dsRNA activator must be at least 15 nucleotides long, and no modification of the 2'-hydroxyl group is tolerated. ssRNA or dsDNA do not act as activators. Strongly inhibited by copper, iron and zinc ions. Partially inhibited by cobalt and nickel ions. Interferon-induced, dsRNA-activated antiviral enzyme which plays a critical role in cellular innate antiviral response. Activated by detection of double stranded RNA (dsRNA): polymerizes higher oligomers of 2'-5'-oligoadenylates (2-5A) from ATP which then bind to the inactive monomeric form of ribonuclease L (RNASEL) leading to its dimerization and subsequent activation. Activation of RNASEL leads to degradation of cellular as well as viral RNA, resulting in the inhibition of protein synthesis, thus terminating viral replication. Can mediate the antiviral effect via the classical RNASEL-dependent pathway or an alternative antiviral pathway independent of RNASEL. In addition, it may also play a role in other cellular processes such as apoptosis, cell growth, differentiation and gene regulation. May act as a negative regulator of lactation, stopping lactation in virally infected mammary gland lobules, thereby preventing transmission of viruses to neonates. Non-infected lobules would not be affected, allowing efficient pup feeding during infection. The protein is 2'-5'-oligoadenylate synthase 2 (OAS2) of Bos taurus (Bovine).